The chain runs to 213 residues: ATP synthase peripheral stalk subunit OSCP, mitochondrial (213 aa).

A mitochondrion-targeting transit peptide spans methionine 1–proline 23. The SIFI-degron motif lies at alanine 5–proline 23. Lysine 54, lysine 60, lysine 70, and lysine 73 each carry N6-acetyllysine. Lysine 90 bears the N6-succinyllysine mark. N6-acetyllysine; alternate is present on residues lysine 158 and lysine 162. Lysine 158 and lysine 162 each carry N6-succinyllysine; alternate. An N6-acetyllysine mark is found at lysine 172, lysine 176, and lysine 192. Lysine 199 carries the post-translational modification N6-succinyllysine.

Belongs to the ATPase delta chain family. Component of the ATP synthase complex composed at least of ATP5F1A/subunit alpha, ATP5F1B/subunit beta, ATP5MC1/subunit c (homooctomer), MT-ATP6/subunit a, MT-ATP8/subunit 8, ATP5ME/subunit e, ATP5MF/subunit f, ATP5MG/subunit g, ATP5MK/subunit k, ATP5MJ/subunit j, ATP5F1C/subunit gamma, ATP5F1D/subunit delta, ATP5F1E/subunit epsilon, ATP5PF/subunit F6, ATP5PB/subunit b, ATP5PD/subunit d, ATP5PO/subunit OSCP. ATP synthase complex consists of a soluble F(1) head domain (subunits alpha(3) and beta(3)) - the catalytic core - and a membrane F(0) domain - the membrane proton channel (subunits c, a, 8, e, f, g, k and j). These two domains are linked by a central stalk (subunits gamma, delta, and epsilon) rotating inside the F1 region and a stationary peripheral stalk (subunits F6, b, d, and OSCP). Post-translationally, acetylation at Lys-162 decreases ATP production. Deacetylated by SIRT3. In terms of processing, in response to mitochondrial stress, the precursor protein is ubiquitinated by the SIFI complex in the cytoplasm before mitochondrial import, leading to its degradation. Within the SIFI complex, UBR4 initiates ubiquitin chain that are further elongated or branched by KCMF1.

The protein localises to the mitochondrion. The protein resides in the mitochondrion inner membrane. In terms of biological role, subunit OSCP, of the mitochondrial membrane ATP synthase complex (F(1)F(0) ATP synthase or Complex V) that produces ATP from ADP in the presence of a proton gradient across the membrane which is generated by electron transport complexes of the respiratory chain. ATP synthase complex consist of a soluble F(1) head domain - the catalytic core - and a membrane F(1) domain - the membrane proton channel. These two domains are linked by a central stalk rotating inside the F(1) region and a stationary peripheral stalk. During catalysis, ATP synthesis in the catalytic domain of F(1) is coupled via a rotary mechanism of the central stalk subunits to proton translocation. In vivo, can only synthesize ATP although its ATP hydrolase activity can be activated artificially in vitro. Part of the complex F(0) domain. Part of the complex F(0) domain and the peripheric stalk, which acts as a stator to hold the catalytic alpha(3)beta(3) subcomplex and subunit a/ATP6 static relative to the rotary elements. The chain is ATP synthase peripheral stalk subunit OSCP, mitochondrial from Pongo abelii (Sumatran orangutan).